A 321-amino-acid polypeptide reads, in one-letter code: Beta-1,3-N-acetylglucosaminyltransferase manic fringe (321 aa).

Topologically, residues 1-7 are cytoplasmic; it reads MQCRLPR. A helical; Signal-anchor for type II membrane protein membrane pass occupies residues 8 to 27; that stretch reads GLAGALLTLLCMGLLCLRYH. Residues 28-321 lie on the Lumenal side of the membrane; sequence LNLSPQRVQE…TPWCPQLGAR (294 aa). R70 provides a ligand contact to substrate. N-linked (GlcNAc...) asparagine glycosylation is present at N109. Cystine bridges form between C110–C121 and C139–C202. D143 contributes to the substrate binding site. Residue D144 participates in Mn(2+) binding. N-linked (GlcNAc...) asparagine glycosylation is present at N185. The active site involves D232. A Mn(2+)-binding site is contributed by H256. C306 and C315 form a disulfide bridge.

Belongs to the glycosyltransferase 31 family. It depends on Mn(2+) as a cofactor.

The protein localises to the golgi apparatus membrane. It catalyses the reaction 3-O-(alpha-L-fucosyl)-L-threonyl-[EGF-like domain protein] + UDP-N-acetyl-alpha-D-glucosamine = 3-O-(N-acetyl-beta-D-glucosaminyl-(1-&gt;3)-alpha-L-fucosyl)-L-threonyl-[EGF-like domain protein] + UDP + H(+). The catalysed reaction is 3-O-(alpha-L-fucosyl)-L-seryl-[EGF-like domain protein] + UDP-N-acetyl-alpha-D-glucosamine = 3-O-(N-acetyl-beta-D-glucosaminyl-(1-&gt;3)-alpha-L-fucosyl)-L-seryl-[EGF-like domain protein] + UDP + H(+). In terms of biological role, glycosyltransferase that initiates the elongation of O-linked fucose residues attached to EGF-like repeats in the extracellular domain of Notch molecules. Modulates NOTCH1 activity by modifying O-fucose residues at specific EGF-like domains resulting in inhibition of NOTCH1 activation by JAG1 and enhancement of NOTCH1 activation by DLL1 via an increase in its binding to DLL1. The chain is Beta-1,3-N-acetylglucosaminyltransferase manic fringe (MFNG) from Pan troglodytes (Chimpanzee).